Consider the following 113-residue polypeptide: Mitochondrial import inner membrane translocase subunit TIM14 (113 aa).

Residues Met-1 to Pro-4 are Mitochondrial intermembrane-facing. Residues Ile-5 to Ile-22 form a helical membrane-spanning segment. Residues Arg-23–Asn-113 are Mitochondrial matrix-facing. In terms of domain architecture, J spans Glu-59 to Asn-113.

The protein belongs to the TIM14 family. Interacts with PHB2; the interaction associates DNAJC19 with the prohibitin complex. Interacts with TIMM16/PAM16. May be a component of the PAM complex at least composed of a mitochondrial HSP70 protein, GRPEL1 or GRPEL2, TIMM44, TIMM16/PAM16 and TIMM14/DNAJC19.

Its subcellular location is the mitochondrion inner membrane. In terms of biological role, mitochondrial co-chaperone which forms a complex with prohibitins to regulate cardiolipin remodeling. May be a component of the PAM complex, a complex required for the translocation of transit peptide-containing proteins from the inner membrane into the mitochondrial matrix in an ATP-dependent manner. May act as a co-chaperone that stimulate the ATP-dependent activity. The polypeptide is Mitochondrial import inner membrane translocase subunit TIM14 (dnajc19) (Dictyostelium discoideum (Social amoeba)).